The sequence spans 685 residues: UvrABC system protein B (685 aa).

Positions 30–188 constitute a Helicase ATP-binding domain; that stretch reads DGVLRGDRWQ…QELVSLHYIR (159 aa). 43–50 is an ATP binding site; it reads GVTGSGKT. Positions 96–119 match the Beta-hairpin motif; sequence YYDFYQPEAYLPALDKYIAKDLRI. In terms of domain architecture, Helicase C-terminal spans 435-597; the sequence is QIDDLLAEIR…ITPRSIRKSL (163 aa). The UVR domain maps to 641–676; sequence YAMVAELRLEMNEAAIQMEYEKAAYLRDEIARLMHG.

Belongs to the UvrB family. As to quaternary structure, forms a heterotetramer with UvrA during the search for lesions. Interacts with UvrC in an incision complex.

Its subcellular location is the cytoplasm. In terms of biological role, the UvrABC repair system catalyzes the recognition and processing of DNA lesions. A damage recognition complex composed of 2 UvrA and 2 UvrB subunits scans DNA for abnormalities. Upon binding of the UvrA(2)B(2) complex to a putative damaged site, the DNA wraps around one UvrB monomer. DNA wrap is dependent on ATP binding by UvrB and probably causes local melting of the DNA helix, facilitating insertion of UvrB beta-hairpin between the DNA strands. Then UvrB probes one DNA strand for the presence of a lesion. If a lesion is found the UvrA subunits dissociate and the UvrB-DNA preincision complex is formed. This complex is subsequently bound by UvrC and the second UvrB is released. If no lesion is found, the DNA wraps around the other UvrB subunit that will check the other stand for damage. This Chlorobium phaeobacteroides (strain DSM 266 / SMG 266 / 2430) protein is UvrABC system protein B.